The sequence spans 329 residues: Phosphoenolpyruvate transferase (329 aa).

7,8-didemethyl-8-hydroxy-5-deazariboflavin is bound at residue Asp61.

The protein belongs to the CofD family. In terms of assembly, homodimer. Mg(2+) serves as cofactor.

The enzyme catalyses enolpyruvoyl-2-diphospho-5'-guanosine + 7,8-didemethyl-8-hydroxy-5-deazariboflavin = dehydro coenzyme F420-0 + GMP + H(+). It participates in cofactor biosynthesis; coenzyme F420 biosynthesis. In terms of biological role, catalyzes the transfer of the phosphoenolpyruvate moiety from enoylpyruvoyl-2-diphospho-5'-guanosine (EPPG) to 7,8-didemethyl-8-hydroxy-5-deazariboflavin (FO) with the formation of dehydro coenzyme F420-0 and GMP. The protein is Phosphoenolpyruvate transferase of Mycobacterium ulcerans (strain Agy99).